We begin with the raw amino-acid sequence, 268 residues long: GTP cyclohydrolase FolE2 (268 aa).

This sequence belongs to the GTP cyclohydrolase IV family.

It catalyses the reaction GTP + H2O = 7,8-dihydroneopterin 3'-triphosphate + formate + H(+). It participates in cofactor biosynthesis; 7,8-dihydroneopterin triphosphate biosynthesis; 7,8-dihydroneopterin triphosphate from GTP: step 1/1. Functionally, converts GTP to 7,8-dihydroneopterin triphosphate. The chain is GTP cyclohydrolase FolE2 from Paraburkholderia xenovorans (strain LB400).